We begin with the raw amino-acid sequence, 176 residues long: Ribosome maturation factor RimM (176 aa).

A PRC barrel domain is found at 93-172 (EGEFFYFDVL…EILTKDAKSI (80 aa)).

It belongs to the RimM family. Binds ribosomal protein uS19.

The protein localises to the cytoplasm. An accessory protein needed during the final step in the assembly of 30S ribosomal subunit, possibly for assembly of the head region. Essential for efficient processing of 16S rRNA. May be needed both before and after RbfA during the maturation of 16S rRNA. It has affinity for free ribosomal 30S subunits but not for 70S ribosomes. This chain is Ribosome maturation factor RimM, found in Campylobacter curvus (strain 525.92).